Here is a 74-residue protein sequence, read N- to C-terminus: Sec-independent protein translocase protein TatA (74 aa).

Residues 1–21 (MGSMSWIHWVIVLGIVALLFG) traverse the membrane as a helical segment. The segment at 51–74 (EVADNKAKSALPRTEAEAEELRKS) is disordered. A compositionally biased stretch (basic and acidic residues) spans 64 to 74 (TEAEAEELRKS).

The protein belongs to the TatA/E family. As to quaternary structure, the Tat system comprises two distinct complexes: a TatABC complex, containing multiple copies of TatA, TatB and TatC subunits, and a separate TatA complex, containing only TatA subunits. Substrates initially bind to the TatABC complex, which probably triggers association of the separate TatA complex to form the active translocon.

Its subcellular location is the cell inner membrane. In terms of biological role, part of the twin-arginine translocation (Tat) system that transports large folded proteins containing a characteristic twin-arginine motif in their signal peptide across membranes. TatA could form the protein-conducting channel of the Tat system. The polypeptide is Sec-independent protein translocase protein TatA (Caulobacter vibrioides (strain ATCC 19089 / CIP 103742 / CB 15) (Caulobacter crescentus)).